Reading from the N-terminus, the 65-residue chain is Hirudin-3B' (65 aa).

The segment at 1 to 3 (VVY) is interaction with thrombin active site. 3 disulfide bridges follow: cysteine 6–cysteine 14, cysteine 16–cysteine 28, and cysteine 22–cysteine 39. The segment at 40–65 (VTGEGTPKPQSHNDGDFEEIPEEYLQ) is disordered. Threonine 45 carries O-linked (GalNAc...) threonine glycosylation. An interaction with fibrinogen-binding exosite of thrombin region spans residues 55–65 (DFEEIPEEYLQ). Positions 55 to 65 (DFEEIPEEYLQ) are enriched in acidic residues. Residue tyrosine 63 is modified to Sulfotyrosine.

This sequence belongs to the protease inhibitor I14 (hirudin) family.

The protein resides in the secreted. Hirudin is a potent thrombin-specific protease inhibitor. It forms a stable non-covalent complex with alpha-thrombin, thereby abolishing its ability to cleave fibrinogen. The sequence is that of Hirudin-3B' from Hirudo medicinalis (Medicinal leech).